The chain runs to 297 residues: uncharacterized protein (297 aa).

Belongs to the glycosyltransferase 2 family.

This is an uncharacterized protein from Mycoplasma genitalium (strain ATCC 33530 / DSM 19775 / NCTC 10195 / G37) (Mycoplasmoides genitalium).